Reading from the N-terminus, the 1219-residue chain is FYVE, RhoGEF and PH domain-containing protein 5 (1219 aa).

Disordered regions lie at residues 1–85, 94–113, 201–227, and 310–367; these read MGSP…SCQI, EEDFSPTLTENPYEIFPTES, SDTQAASGTLSGYSTWEEGDSEGGQVP, and GRES…PSSV. The segment covering 23–50 has biased composition (acidic residues); sequence EVFEEDSADAAEGEDQIEQEEPPNCDEE. Residues 201-214 show a composition bias toward polar residues; it reads SDTQAASGTLSGYS. Residues 319-337 are compositionally biased toward basic and acidic residues; it reads REPEGAGLDSHRVRRKEDN. The segment covering 346–356 has biased composition (polar residues); the sequence is SSGSFSQRSHL. Residues 357–367 are compositionally biased toward low complexity; sequence PSSGTSTPSSV. Thr555 carries the phosphothreonine modification. Over residues 586-599 the composition is skewed to low complexity; sequence ESKQQSSEQEAESA. The segment at 586-644 is disordered; it reads ESKQQSSEQEAESAYTEPYKVCPISAAPREDLTSDEEQGSSEEEDSASRDPSLSHKGEG. The span at 618–630 shows a compositional bias: acidic residues; sequence TSDEEQGSSEEED. Basic and acidic residues predominate over residues 631-644; sequence SASRDPSLSHKGEG. A DH domain is found at 647–840; that stretch reads RALVIAQELL…SKVTDRANES (194 aa). The PH 1 domain occupies 869 to 963; sequence EFLKEGTLMR…WHYCLSRALP (95 aa). The FYVE-type zinc finger occupies 998–1057; the sequence is VTHAMMCMNCGCDFSLTVRRHHCHACGKIVCRNCSRNKYPLKCLKNRMAKVCDGCFRELK. Residues Cys1004, Cys1007, Cys1020, Cys1023, Cys1028, Cys1031, Cys1049, and Cys1052 each contribute to the Zn(2+) site. The PH 2 domain occupies 1120-1218; it reads GSAISGYLSR…WMEAMEDASV (99 aa).

In terms of tissue distribution, expressed in highly vascularized tissues, such as lung, kidney and ovary.

It localises to the cytoplasm. The protein localises to the cytoskeleton. It is found in the cell projection. Its subcellular location is the ruffle membrane. The protein resides in the endoplasmic reticulum. It localises to the golgi apparatus. The protein localises to the early endosome. Functionally, activates CDC42, a member of the Ras-like family of Rho- and Rac proteins, by exchanging bound GDP for free GTP. Mediates VEGF-induced CDC42 activation. May regulate proangiogenic action of VEGF in vascular endothelial cells, including network formation, directional movement and proliferation. May play a role in regulating the actin cytoskeleton and cell shape. The chain is FYVE, RhoGEF and PH domain-containing protein 5 (Fgd5) from Mus musculus (Mouse).